We begin with the raw amino-acid sequence, 497 residues long: Glycerol kinase (497 aa).

Residue Thr-13 coordinates ADP. 3 residues coordinate ATP: Thr-13, Thr-14, and Ser-15. Residue Thr-13 coordinates sn-glycerol 3-phosphate. Arg-17 contacts ADP. Arg-83, Glu-84, and Tyr-135 together coordinate sn-glycerol 3-phosphate. Glycerol contacts are provided by Arg-83, Glu-84, and Tyr-135. His-231 is subject to Phosphohistidine; by HPr. Asp-245 contributes to the sn-glycerol 3-phosphate binding site. Asp-245 and Gln-246 together coordinate glycerol. ADP is bound by residues Thr-267 and Gly-310. Thr-267, Gly-310, Gln-314, and Gly-411 together coordinate ATP. Gly-411 and Asn-415 together coordinate ADP.

Belongs to the FGGY kinase family. Homotetramer and homodimer (in equilibrium). Post-translationally, the phosphoenolpyruvate-dependent sugar phosphotransferase system (PTS), including enzyme I, and histidine-containing protein (HPr) are required for the phosphorylation, which leads to the activation of the enzyme.

The enzyme catalyses glycerol + ATP = sn-glycerol 3-phosphate + ADP + H(+). It participates in polyol metabolism; glycerol degradation via glycerol kinase pathway; sn-glycerol 3-phosphate from glycerol: step 1/1. Its activity is regulated as follows. Activated by phosphorylation and inhibited by fructose 1,6-bisphosphate (FBP). Its function is as follows. Key enzyme in the regulation of glycerol uptake and metabolism. Catalyzes the phosphorylation of glycerol to yield sn-glycerol 3-phosphate. This Listeria innocua serovar 6a (strain ATCC BAA-680 / CLIP 11262) protein is Glycerol kinase.